Reading from the N-terminus, the 128-residue chain is Small ribosomal subunit protein uS9 (128 aa).

Residues 97–113 (RSEGFMTRDPRSVERKK) show a composition bias toward basic and acidic residues. Residues 97-128 (RSEGFMTRDPRSVERKKPGQPKARRRFQFSKR) form a disordered region. Residues 114-128 (PGQPKARRRFQFSKR) are compositionally biased toward basic residues.

It belongs to the universal ribosomal protein uS9 family.

The polypeptide is Small ribosomal subunit protein uS9 (Bacteroides fragilis (strain ATCC 25285 / DSM 2151 / CCUG 4856 / JCM 11019 / LMG 10263 / NCTC 9343 / Onslow / VPI 2553 / EN-2)).